The following is a 290-amino-acid chain: Acetyl-coenzyme A carboxylase carboxyl transferase subunit beta (290 aa).

In terms of domain architecture, CoA carboxyltransferase N-terminal spans 27 to 290 (LWHKCPSCEA…FTHSPSPVSA (264 aa)). Residues Cys-31, Cys-34, Cys-50, and Cys-53 each coordinate Zn(2+). A C4-type zinc finger spans residues 31 to 53 (CPSCEAVLYRPELEKTLDVCPKC).

It belongs to the AccD/PCCB family. As to quaternary structure, acetyl-CoA carboxylase is a heterohexamer composed of biotin carboxyl carrier protein (AccB), biotin carboxylase (AccC) and two subunits each of ACCase subunit alpha (AccA) and ACCase subunit beta (AccD). Zn(2+) serves as cofactor.

The protein localises to the cytoplasm. It carries out the reaction N(6)-carboxybiotinyl-L-lysyl-[protein] + acetyl-CoA = N(6)-biotinyl-L-lysyl-[protein] + malonyl-CoA. It functions in the pathway lipid metabolism; malonyl-CoA biosynthesis; malonyl-CoA from acetyl-CoA: step 1/1. In terms of biological role, component of the acetyl coenzyme A carboxylase (ACC) complex. Biotin carboxylase (BC) catalyzes the carboxylation of biotin on its carrier protein (BCCP) and then the CO(2) group is transferred by the transcarboxylase to acetyl-CoA to form malonyl-CoA. The sequence is that of Acetyl-coenzyme A carboxylase carboxyl transferase subunit beta from Pseudomonas aeruginosa (strain UCBPP-PA14).